Reading from the N-terminus, the 173-residue chain is Nucleoside-triphosphatase THEP1 (173 aa).

Residues Gly15–Thr22 and Leu101–Gly108 contribute to the ATP site.

The protein belongs to the THEP1 NTPase family.

It carries out the reaction a ribonucleoside 5'-triphosphate + H2O = a ribonucleoside 5'-diphosphate + phosphate + H(+). Its function is as follows. Has nucleotide phosphatase activity towards ATP, GTP, CTP, TTP and UTP. May hydrolyze nucleoside diphosphates with lower efficiency. The sequence is that of Nucleoside-triphosphatase THEP1 from Pyrobaculum aerophilum (strain ATCC 51768 / DSM 7523 / JCM 9630 / CIP 104966 / NBRC 100827 / IM2).